The primary structure comprises 1468 residues: DNA polymerase alpha catalytic subunit A (1468 aa).

The span at 1–12 shows a compositional bias: basic and acidic residues; it reads MSSKSEKLEKLR. Disordered regions lie at residues 1–34, 71–135, and 166–205; these read MSSK…SDGD, GVEE…KKSI, and NLNS…PDSS. Position 2 is an N-acetylserine (S2). S31 bears the Phosphoserine mark. Positions 71-80 are enriched in basic and acidic residues; it reads GVEEDWREVD. A phosphoserine mark is found at S82, S83, S84, S169, and S170. Residues 166–176 are compositionally biased toward polar residues; the sequence is NLNSSPTSEFK. Residue T172 is modified to Phosphothreonine. The segment covering 183-205 has biased composition (basic and acidic residues); that stretch reads NGNDESSHDAGISKKVKIDPDSS. 2 positions are modified to phosphoserine: S240 and S274. Positions 256 to 275 are disordered; sequence LANPPSAQSLADEEDDEDSD. The segment covering 266–275 has biased composition (acidic residues); that stretch reads ADEEDDEDSD. Phosphothreonine occurs at positions 309 and 313. The disordered stretch occupies residues 813–837; it reads PDKEGNRSRAQKQRQNEENADAPVN. The interval 1246 to 1381 is DNA-binding; sequence KKYFRREGGN…CTGVMRYKYS (136 aa). The Zn(2+) site is built by C1287, C1290, C1314, C1317, C1348, C1353, C1367, and C1372. Residues 1287-1317 form a CysA-type zinc finger; that stretch reads CPSCDKRFPFGGIVSSNYYRVSYNGLQCKHC. The CysB motif motif lies at 1348–1372; sequence CDDSTCGIVTRQVSVFGKRCLNDGC.

The protein belongs to the DNA polymerase type-B family. In terms of assembly, DNA polymerase alpha:primase is a four subunit enzyme complex, which is assembled throughout the cell cycle, and consists of the two DNA polymerase subunits A POL1 and B POL12, and the DNA primase large PRI2 and small PRI1 subunits. Subunit B POL12 binds to subunit A POL1. POL1 interacts with CDC13, POB3, SPT16 and MCM10.

It is found in the nucleus. It catalyses the reaction DNA(n) + a 2'-deoxyribonucleoside 5'-triphosphate = DNA(n+1) + diphosphate. Catalytic component of DNA polymerase alpha, which in complex with DNA primase (DNA polymerase alpha:primase) constitutes a replicative polymerase. POL1 has a role in promoting telomere replication during interaction with CDC13. The protein is DNA polymerase alpha catalytic subunit A (POL1) of Saccharomyces cerevisiae (strain ATCC 204508 / S288c) (Baker's yeast).